Reading from the N-terminus, the 352-residue chain is C-X-C chemokine receptor type 4 (352 aa).

The tract at residues 1–21 (MEGISIYTSDNYTEEMGSGDY) is important for chemokine binding and signaling. The Extracellular segment spans residues 1-38 (MEGISIYTSDNYTEEMGSGDYDSIKEPCFREENAHFNR). Y7 carries the sulfotyrosine modification. N11 is a glycosylation site (N-linked (GlcNAc...) asparagine). Y12 bears the Sulfotyrosine mark. O-linked (Xyl...) (chondroitin sulfate) serine glycosylation is present at S18. Position 21 is a sulfotyrosine (Y21). Disulfide bonds link C28–C274 and C109–C186. The helical transmembrane segment at 39–63 (IFLPTIYSIIFLTGIVGNGLVILVM) threads the bilayer. The Cytoplasmic portion of the chain corresponds to 64–77 (GYQKKLRSMTDKYR). The helical transmembrane segment at 78–99 (LHLSVADLLFVITLPFWAVDAV) threads the bilayer. The interval 94-97 (WAVD) is chemokine binding. Residues 100–110 (ANWYFGNFLCK) lie on the Extracellular side of the membrane. A helical transmembrane segment spans residues 111–130 (AVHVIYTVNLYSSVLILAFI). Residues 113 to 117 (HVIYT) are chemokine binding. The Cytoplasmic portion of the chain corresponds to 131 to 154 (SLDRYLAIVHATNSQKPRKLLAEK). The short motif at 133 to 135 (DRY) is the Important for signaling element. The tract at residues 135–147 (YLAIVHATNSQKP) is involved in dimerization; when bound to chemokine. The chain crosses the membrane as a helical span at residues 155 to 174 (VVYVGVWIPALLLTIPDFIF). Over 175–195 (ASVSEADDRYICDRFYPNDLW) the chain is Extracellular. The tract at residues 186-190 (CDRFY) is chemokine binding, important for signaling. An involved in dimerization region spans residues 191-210 (PNDLWVVVFQFQHIMVGLIL). Residues 196-216 (VVVFQFQHIMVGLILPGIVIL) form a helical membrane-spanning segment. The Cytoplasmic segment spans residues 217-241 (SCYCIIISKLSHSKGHQKRKALKTT). A helical membrane pass occupies residues 242-261 (VILILAFFACWLPYYIGISI). Residues 262 to 282 (DSFILLEIIKQGCEFENTVHK) are Extracellular-facing. The segment at 266 to 268 (LLE) is involved in dimerization. The helical transmembrane segment at 283–302 (WISITEALAFFHCCLNPILY) threads the bilayer. At 303–352 (AFLGAKFKTSAQHALTSVSRGSSLKILSKGKRGGHSSVSTESESSSFHSS) the chain is on the cytoplasmic side. Phosphoserine occurs at positions 319 and 321. Phosphoserine; by PKC and GRK6 is present on residues S324 and S325. The tract at residues 329-352 (LSKGKRGGHSSVSTESESSSFHSS) is disordered. S330 carries the post-translational modification Phosphoserine; by GRK6. A Glycyl lysine isopeptide (Lys-Gly) (interchain with G-Cter in ubiquitin) cross-link involves residue K331. A compositionally biased stretch (low complexity) spans 337–352 (HSSVSTESESSSFHSS). Residue S339 is modified to Phosphoserine; by GRK6. S348 and S351 each carry phosphoserine.

This sequence belongs to the G-protein coupled receptor 1 family. As to quaternary structure, monomer. Can form homodimers. Interacts with CD164. Interacts with ARRB2; the interaction is dependent on the C-terminal phosphorylation of CXCR4 and allows activation of MAPK1 and MAPK3. Interacts with ARR3; the interaction is dependent on the C-terminal phosphorylation of CXCR4 and modulates calcium mobilization. Interacts with RNF113A; the interaction, enhanced by CXCL12, promotes CXCR4 ubiquitination and subsequent degradation. Interacts (via the cytoplasmic C-terminal) with ITCH (via the WW domains I and II); the interaction, enhanced by CXCL12, promotes CXCR4 ubiquitination and leads to its degradation. Interacts with extracellular ubiquitin. Interacts with DBN1; this interaction is enhanced by antigenic stimulation. Following LPS binding, may form a complex with GDF5, HSP90AA1 and HSPA8. Post-translationally, phosphorylated on agonist stimulation. Rapidly phosphorylated on serine and threonine residues in the C-terminal. Phosphorylation at Ser-324 and Ser-325 leads to recruitment of ITCH, ubiquitination and protein degradation. Ubiquitinated after ligand binding, leading to its degradation. Ubiquitinated by ITCH at the cell membrane on agonist stimulation. The ubiquitin-dependent mechanism, endosomal sorting complex required for transport (ESCRT), then targets CXCR4 for lysosomal degradation. This process is dependent also on prior Ser-/Thr-phosphorylation in the C-terminal of CXCR4. Also binding of ARRB1 to STAM negatively regulates CXCR4 sorting to lysosomes though modulating ubiquitination of SFR5S. In terms of processing, sulfation is required for efficient binding of CXCL12/SDF-1alpha and promotes its dimerization. Post-translationally, O- and N-glycosylated. N-glycosylation can mask coreceptor function. The O-glycosylation chondroitin sulfate attachment does not affect interaction with CXCL12/SDF-1alpha nor its coreceptor activity.

Its subcellular location is the cell membrane. It localises to the cell junction. It is found in the early endosome. The protein resides in the late endosome. The protein localises to the lysosome. Functionally, receptor for the C-X-C chemokine CXCL12/SDF-1 that transduces a signal by increasing intracellular calcium ion levels and enhancing MAPK1/MAPK3 activation. Involved in the AKT signaling cascade. Plays a role in regulation of cell migration, e.g. during wound healing. Acts as a receptor for extracellular ubiquitin; leading to enhanced intracellular calcium ions and reduced cellular cAMP levels. Binds bacterial lipopolysaccharide (LPS) et mediates LPS-induced inflammatory response, including TNF secretion by monocytes. Involved in hematopoiesis and in cardiac ventricular septum formation. Also plays an essential role in vascularization of the gastrointestinal tract, probably by regulating vascular branching and/or remodeling processes in endothelial cells. Involved in cerebellar development. In the CNS, could mediate hippocampal-neuron survival. This chain is C-X-C chemokine receptor type 4 (CXCR4), found in Macaca fascicularis (Crab-eating macaque).